Reading from the N-terminus, the 241-residue chain is Ubiquinone biosynthesis O-methyltransferase (241 aa).

The S-adenosyl-L-methionine site is built by Arg44, Gly64, Asp85, and Met129.

The protein belongs to the methyltransferase superfamily. UbiG/COQ3 family.

The enzyme catalyses a 3-demethylubiquinol + S-adenosyl-L-methionine = a ubiquinol + S-adenosyl-L-homocysteine + H(+). The catalysed reaction is a 3-(all-trans-polyprenyl)benzene-1,2-diol + S-adenosyl-L-methionine = a 2-methoxy-6-(all-trans-polyprenyl)phenol + S-adenosyl-L-homocysteine + H(+). Its pathway is cofactor biosynthesis; ubiquinone biosynthesis. In terms of biological role, O-methyltransferase that catalyzes the 2 O-methylation steps in the ubiquinone biosynthetic pathway. This chain is Ubiquinone biosynthesis O-methyltransferase, found in Serratia proteamaculans (strain 568).